The following is a 418-amino-acid chain: AP-3 complex subunit mu-1 (418 aa).

The region spanning 176 to 417 (NNEAYFDVVE…VTKAGKFQVR (242 aa)) is the MHD domain.

It belongs to the adaptor complexes medium subunit family. As to quaternary structure, adaptor protein complex 3 (AP-3) is a heterotetramer composed of two large adaptins (delta-type subunit AP3D1 and beta-type subunit AP3B1 or AP3B2), a medium adaptin (mu-type subunit AP3M1 or AP3M2) and a small adaptin (sigma-type subunit APS1 or AP3S2). Interacts with AGAP1. AP-3 associates with the BLOC-1 complex. (Microbial infection) Interacts with human respiratory virus (HRSV) matrix protein; this interaction plays an essential role in trafficking the matrix protein in host cells.

It is found in the golgi apparatus. The protein resides in the cytoplasmic vesicle membrane. Part of the AP-3 complex, an adaptor-related complex which is not clathrin-associated. The complex is associated with the Golgi region as well as more peripheral structures. It facilitates the budding of vesicles from the Golgi membrane and may be directly involved in trafficking to lysosomes. In concert with the BLOC-1 complex, AP-3 is required to target cargos into vesicles assembled at cell bodies for delivery into neurites and nerve terminals. The polypeptide is AP-3 complex subunit mu-1 (AP3M1) (Homo sapiens (Human)).